A 390-amino-acid chain; its full sequence is MRYITAGESHGPQLTTIIEGVPAGLPLVADDINEELARRQKGYGRGRRMQIETDQVQIVSGVRHGETLGSPIALVVENRDFAHWTKIMGAEPLTEQEEKEMKRKVTKPRPGHADLNGAIKYGHRDMRNVLERSSARETTVRVAAGAVAKKVLAELGITVAGHVIEIGGVEAKETTYRSIEELKSITEASPVRCLDEEAGNQMIKAIDDAKSNGDSIGGIVEVIVEGMPIGVGSYVHYDRKLDAKLAAAIMSINAFKGVEIGIGFEAAHRPGSEVHDEILWNEEHGYTRRTNNAGGLEGGMTTGMPIVVRGVMKPIPTLYKPLQSVDIDTKEPFTASIERSDSCAVPAASVVAEAVVAWELATALIEQFGLDRMDLIRENIEKHNEYARGF.

Residues Arg39 and Arg45 each coordinate NADP(+). The disordered stretch occupies residues 95–117; it reads EQEEKEMKRKVTKPRPGHADLNG. Residues 132–134, 253–254, Gly298, 313–317, and Arg339 each bind FMN; these read RSS, NA, and KPIPT.

The protein belongs to the chorismate synthase family. In terms of assembly, homotetramer. Requires FMNH2 as cofactor.

The catalysed reaction is 5-O-(1-carboxyvinyl)-3-phosphoshikimate = chorismate + phosphate. Its pathway is metabolic intermediate biosynthesis; chorismate biosynthesis; chorismate from D-erythrose 4-phosphate and phosphoenolpyruvate: step 7/7. In terms of biological role, catalyzes the anti-1,4-elimination of the C-3 phosphate and the C-6 proR hydrogen from 5-enolpyruvylshikimate-3-phosphate (EPSP) to yield chorismate, which is the branch point compound that serves as the starting substrate for the three terminal pathways of aromatic amino acid biosynthesis. This reaction introduces a second double bond into the aromatic ring system. This chain is Chorismate synthase 1, found in Bacillus thuringiensis (strain Al Hakam).